A 360-amino-acid chain; its full sequence is Phospho-N-acetylmuramoyl-pentapeptide-transferase (360 aa).

10 helical membrane passes run 18-38 (VFSY…MMSL), 73-93 (TMGG…WADL), 97-117 (YVWA…VDDY), 135-155 (FWQS…STQA), 168-188 (VLPQ…VGTS), 199-219 (GLAI…AYLT), 236-256 (ASEL…FLWF), 263-283 (VFMG…IAVL), 288-308 (LLLI…ILQV), and 339-359 (IVRF…TLKI).

Belongs to the glycosyltransferase 4 family. MraY subfamily. Mg(2+) serves as cofactor.

It localises to the cell inner membrane. It catalyses the reaction UDP-N-acetyl-alpha-D-muramoyl-L-alanyl-gamma-D-glutamyl-meso-2,6-diaminopimeloyl-D-alanyl-D-alanine + di-trans,octa-cis-undecaprenyl phosphate = di-trans,octa-cis-undecaprenyl diphospho-N-acetyl-alpha-D-muramoyl-L-alanyl-D-glutamyl-meso-2,6-diaminopimeloyl-D-alanyl-D-alanine + UMP. It functions in the pathway cell wall biogenesis; peptidoglycan biosynthesis. In terms of biological role, catalyzes the initial step of the lipid cycle reactions in the biosynthesis of the cell wall peptidoglycan: transfers peptidoglycan precursor phospho-MurNAc-pentapeptide from UDP-MurNAc-pentapeptide onto the lipid carrier undecaprenyl phosphate, yielding undecaprenyl-pyrophosphoryl-MurNAc-pentapeptide, known as lipid I. This chain is Phospho-N-acetylmuramoyl-pentapeptide-transferase, found in Pseudoalteromonas translucida (strain TAC 125).